The chain runs to 396 residues: NADH-quinone oxidoreductase subunit D (396 aa).

It belongs to the complex I 49 kDa subunit family. In terms of assembly, NDH-1 is composed of 14 different subunits. Subunits NuoB, C, D, E, F, and G constitute the peripheral sector of the complex.

Its subcellular location is the cell inner membrane. It catalyses the reaction a quinone + NADH + 5 H(+)(in) = a quinol + NAD(+) + 4 H(+)(out). NDH-1 shuttles electrons from NADH, via FMN and iron-sulfur (Fe-S) centers, to quinones in the respiratory chain. The immediate electron acceptor for the enzyme in this species is believed to be ubiquinone. Couples the redox reaction to proton translocation (for every two electrons transferred, four hydrogen ions are translocated across the cytoplasmic membrane), and thus conserves the redox energy in a proton gradient. The polypeptide is NADH-quinone oxidoreductase subunit D (Bartonella tribocorum (strain CIP 105476 / IBS 506)).